The following is a 382-amino-acid chain: Type II secretion system protein L (382 aa).

Over 1-233 the chain is Cytoplasmic; that stretch reads MSGVSALFLP…QQSSQWRRWR (233 aa). A helical transmembrane segment spans residues 234–254; that stretch reads PLLGLVGLWLVLQWGFTLVQA. At 255-382 the chain is on the periplasmic side; sequence WQLQREGDRY…TVSARLVIGG (128 aa).

Belongs to the GSP L family. As to quaternary structure, type II secretion system is composed of four main components: the outer membrane complex, the inner membrane complex, the cytoplasmic secretion ATPase and the periplasm-spanning pseudopilus. Forms homodimers. Interacts with XcpZ/GspM. Interacts with XcpR/GspE and XcpS/GspF.

It localises to the cell inner membrane. Its function is as follows. Inner membrane component of the type II secretion system required for the energy-dependent secretion of extracellular factors such as proteases and toxins from the periplasm. Plays a role in the complex assembly and recruits XcpZ resulting in a stable complex in the inner membrane. Provides thus a link between the energy-providing XcpR protein in the cytoplasm and the rest of the T2SS machinery. This chain is Type II secretion system protein L (xcpY), found in Pseudomonas aeruginosa (strain ATCC 15692 / DSM 22644 / CIP 104116 / JCM 14847 / LMG 12228 / 1C / PRS 101 / PAO1).